Consider the following 1129-residue polypeptide: Ubiquitin carboxyl-terminal hydrolase 7 (1129 aa).

The 141-residue stretch at 29 to 169 (EGHLALDIER…DDVIRLRCRF (141 aa)) folds into the MATH domain. One can recognise a USP domain in the interval 190-500 (IGLRNQGATC…SAYMLVYVRD (311 aa)). Cys199 acts as the Nucleophile in catalysis. His439 acts as the Proton acceptor in catalysis.

The protein belongs to the peptidase C19 family.

The protein localises to the nucleus. The enzyme catalyses Thiol-dependent hydrolysis of ester, thioester, amide, peptide and isopeptide bonds formed by the C-terminal Gly of ubiquitin (a 76-residue protein attached to proteins as an intracellular targeting signal).. Functionally, hydrolase that deubiquitinates target proteins. In Caenorhabditis briggsae, this protein is Ubiquitin carboxyl-terminal hydrolase 7.